A 217-amino-acid chain; its full sequence is ATP phosphoribosyltransferase (217 aa).

This sequence belongs to the ATP phosphoribosyltransferase family. Short subfamily. As to quaternary structure, heteromultimer composed of HisG and HisZ subunits.

Its subcellular location is the cytoplasm. It carries out the reaction 1-(5-phospho-beta-D-ribosyl)-ATP + diphosphate = 5-phospho-alpha-D-ribose 1-diphosphate + ATP. It functions in the pathway amino-acid biosynthesis; L-histidine biosynthesis; L-histidine from 5-phospho-alpha-D-ribose 1-diphosphate: step 1/9. In terms of biological role, catalyzes the condensation of ATP and 5-phosphoribose 1-diphosphate to form N'-(5'-phosphoribosyl)-ATP (PR-ATP). Has a crucial role in the pathway because the rate of histidine biosynthesis seems to be controlled primarily by regulation of HisG enzymatic activity. The protein is ATP phosphoribosyltransferase of Burkholderia vietnamiensis (strain G4 / LMG 22486) (Burkholderia cepacia (strain R1808)).